Consider the following 184-residue polypeptide: Peptide deformylase 2 (184 aa).

Positions 110 and 153 each coordinate Fe cation. E154 is a catalytic residue. Position 157 (H157) interacts with Fe cation.

Belongs to the polypeptide deformylase family. Fe(2+) serves as cofactor.

It catalyses the reaction N-terminal N-formyl-L-methionyl-[peptide] + H2O = N-terminal L-methionyl-[peptide] + formate. Its function is as follows. Removes the formyl group from the N-terminal Met of newly synthesized proteins. Requires at least a dipeptide for an efficient rate of reaction. N-terminal L-methionine is a prerequisite for activity but the enzyme has broad specificity at other positions. This Bacillus subtilis (strain 168) protein is Peptide deformylase 2 (defB).